The chain runs to 254 residues: TLC domain-containing protein At5g14285 (254 aa).

6 helical membrane passes run Asp-12–Phe-32, Ser-45–Phe-65, Thr-82–Phe-101, Phe-124–Ser-144, Leu-172–Phe-192, and Trp-211–Ile-231. Positions Gln-38–Arg-248 constitute a TLC domain.

It localises to the membrane. This Arabidopsis thaliana (Mouse-ear cress) protein is TLC domain-containing protein At5g14285.